We begin with the raw amino-acid sequence, 556 residues long: Guard cell S-type anion channel SLAC1 (556 aa).

Positions 1–103 (MERKQSNAHS…GIINGGDGRK (103 aa)) are disordered. Residues 1-189 (MERKQSNAHS…EQWPFLLRFP (189 aa)) lie on the Cytoplasmic side of the membrane. Positions 10-36 (STFADINEVEDEAEQELQQQENNNNKR) form a coiled coil. Residues 25–34 (ELQQQENNNN) show a composition bias toward low complexity. Serine 59 is subject to Phosphoserine; by SRK2E. Positions 69–79 (RESRERDDKKS) are enriched in basic and acidic residues. Serine 86, serine 113, and serine 120 each carry phosphoserine; by SRK2E. The segment covering 86 to 99 (SFGGFESGGIINGG) has biased composition (gly residues). Serine 146 is modified (phosphoserine). The helical transmembrane segment at 190-210 (IGCFGICLGLSSQAVLWLALA) threads the bilayer. Residues 211–216 (KSPATN) lie on the Extracellular side of the membrane. A helical membrane pass occupies residues 217–237 (FLHITPLINLVVWLFSLVVLV). The Cytoplasmic segment spans residues 238–265 (SVSFTYILKCIFYFEAVKREYFHPVRVN). The helical transmembrane segment at 266–286 (FFFAPWVVCMFLAISVPPMFS) threads the bilayer. At 287 to 295 (PNRKYLHPA) the chain is on the extracellular side. A helical transmembrane segment spans residues 296–316 (IWCVFMGPYFFLELKIYGQWL). Residues 317–325 (SGGKRRLCK) lie on the Cytoplasmic side of the membrane. Residues 326-346 (VANPSSHLSVVGNFVGAILAS) traverse the membrane as a helical segment. The Extracellular portion of the chain corresponds to 347–352 (KVGWDE). The chain crosses the membrane as a helical span at residues 353-373 (VAKFLWAVGFAHYLVVFVTLY). The Cytoplasmic portion of the chain corresponds to 374–388 (QRLPTSEALPKELHP). The chain crosses the membrane as a helical span at residues 389 to 409 (VYSMFIAAPSAASIAWNTIYG). Residues 410-418 (QFDGCSRTC) are Extracellular-facing. The helical transmembrane segment at 419–439 (FFIALFLYISLVARINFFTGF) threads the bilayer. Position 440 (lysine 440) is a topological domain, cytoplasmic. Residues 441–463 (FSVAWWSYTFPMTTASVATIKYA) form a helical membrane-spanning segment. The Extracellular portion of the chain corresponds to 464–479 (EAVPGYPSRALALTLS). A helical membrane pass occupies residues 480–500 (FISTAMVCVLFVSTLLHAFVW). Over 501–556 (QTLFPNDLAIAITKRKLTREKKPFKRAYDLKRWTKQALAKKISAEKDFEAEEESHH) the chain is Cytoplasmic.

It belongs to the SLAC1 S-type anion channel family. Homotrimer. Interacts with SRK2E, CPK6, CPK21, CPK23 and PP2CA. The channel is inactivated upon PP2CA and ABI1 binding. Interacts with KAT1, KAT2, KAT3/KC1 and AKT2. Interacts with GHR1. In terms of processing, phosphorylation by SRK2E, especially on Ser-120, activates the channel. Also phosphorylated and activated by CPK21 and CPK23. Abscisic acid (ABA) promotes phosphorylation. This phosphorylation is inhibited by ABI1. Phosphorylated and activated by GHR1; this phosphorylation is repressed by ABI2 but not ABI1. Phosphorylated by HT1 on N-terminus but not C-terminus. In terms of tissue distribution, preferentially expressed in guard cells. Also detected in the vascular strands close to the leaf margins.

The protein localises to the cell membrane. Activated by GHR1-mediated phosphorylation which is negatively regulated by ABI2 but not ABI1. Activation by SRK2E/OST1 and GHR1 is repressed by HT1. Functionally, slow, weak voltage-dependent S-type anion efflux channel involved in maintenance of anion homeostasis. Cl(-) efflux through SLAC1 causes membrane depolarization, which activates outward-rectifying K1 channels, leading to KCl and water efflux to reduce turgor further and cause stomatal closure, that reduces water loss and promotes leaf turgor. Essential for stomatal closure in response to CO(2), abscisic acid (ABA), ozone O(3), light/dark transitions, humidity change, calcium ions, hydrogen peroxide H(2)O(2), reactive oxygen species (ROS), and nitric oxide. Binds to the highly selective inward-rectifying potassium channels KAT1 and AKT2, and inhibits their activities. Functions as an essential negative regulator of inward potassium channels in guard cells. Essential for the efficient stomatal closure and opening in guard cells. Involved in the local and/or systemic stomatal responses (e.g. stomatal closure) to light stress. This is Guard cell S-type anion channel SLAC1 from Arabidopsis thaliana (Mouse-ear cress).